We begin with the raw amino-acid sequence, 511 residues long: Ulvan-active sulfatase (511 aa).

The N-terminal stretch at 1–34 (MNFKQNIVYKKMAISMKITAIRPIALVISFTLLS) is a signal peptide. Cys-35 is lipidated: N-palmitoyl cysteine. Cys-35 carries S-diacylglycerol cysteine lipidation. Ca(2+) contacts are provided by Asp-59 and Cys-99. The active-site Nucleophile is Cys-99. Cys-99 is subject to 3-oxoalanine (Cys). Residue His-149 is part of the active site. Asp-305 is a binding site for Ca(2+).

Belongs to the sulfatase family. Ca(2+) serves as cofactor. The conversion to 3-oxoalanine (also known as C-formylglycine, FGly), of a serine or cysteine residue in prokaryotes and of a cysteine residue in eukaryotes, is critical for catalytic activity. This post-translational modification is severely defective in multiple sulfatase deficiency (MSD).

It localises to the cell membrane. Its function is as follows. Sulfatase involved in ulvan degradation. Ulvan is the main polysaccharide component of the Ulvales (green seaweed) cell wall. It is composed of disaccharide building blocks comprising 3-sulfated rhamnose (Rha3S) linked to D-glucuronic acid (GlcA), L-iduronic acid (IduA), or D-xylose (Xyl). The protein is Ulvan-active sulfatase of Formosa agariphila (strain DSM 15362 / KCTC 12365 / LMG 23005 / KMM 3901 / M-2Alg 35-1).